A 398-amino-acid polypeptide reads, in one-letter code: Lipoyl synthase, mitochondrial (398 aa).

The transit peptide at 1-32 (MIALRVHNTRVVSRSLTVWTRPSPTLTLSRSL) directs the protein to the mitochondrion. The [4Fe-4S] cluster site is built by C117, C122, C128, C147, C151, C154, and S362. A Radical SAM core domain is found at 132-351 (KKSEATATIM…RDTALEMGFL (220 aa)).

The protein belongs to the radical SAM superfamily. Lipoyl synthase family. Requires [4Fe-4S] cluster as cofactor.

Its subcellular location is the mitochondrion. It catalyses the reaction [[Fe-S] cluster scaffold protein carrying a second [4Fe-4S](2+) cluster] + N(6)-octanoyl-L-lysyl-[protein] + 2 oxidized [2Fe-2S]-[ferredoxin] + 2 S-adenosyl-L-methionine + 4 H(+) = [[Fe-S] cluster scaffold protein] + N(6)-[(R)-dihydrolipoyl]-L-lysyl-[protein] + 4 Fe(3+) + 2 hydrogen sulfide + 2 5'-deoxyadenosine + 2 L-methionine + 2 reduced [2Fe-2S]-[ferredoxin]. The protein operates within protein modification; protein lipoylation via endogenous pathway; protein N(6)-(lipoyl)lysine from octanoyl-[acyl-carrier-protein]: step 2/2. In terms of biological role, catalyzes the radical-mediated insertion of two sulfur atoms into the C-6 and C-8 positions of the octanoyl moiety bound to the lipoyl domains of lipoate-dependent enzymes, thereby converting the octanoylated domains into lipoylated derivatives. This is Lipoyl synthase, mitochondrial from Scheffersomyces stipitis (strain ATCC 58785 / CBS 6054 / NBRC 10063 / NRRL Y-11545) (Yeast).